We begin with the raw amino-acid sequence, 257 residues long: 3-deoxy-manno-octulosonate cytidylyltransferase (257 aa).

This sequence belongs to the KdsB family.

It localises to the cytoplasm. It carries out the reaction 3-deoxy-alpha-D-manno-oct-2-ulosonate + CTP = CMP-3-deoxy-beta-D-manno-octulosonate + diphosphate. Its pathway is nucleotide-sugar biosynthesis; CMP-3-deoxy-D-manno-octulosonate biosynthesis; CMP-3-deoxy-D-manno-octulosonate from 3-deoxy-D-manno-octulosonate and CTP: step 1/1. It participates in bacterial outer membrane biogenesis; lipopolysaccharide biosynthesis. Activates KDO (a required 8-carbon sugar) for incorporation into bacterial lipopolysaccharide in Gram-negative bacteria. This Halorhodospira halophila (strain DSM 244 / SL1) (Ectothiorhodospira halophila (strain DSM 244 / SL1)) protein is 3-deoxy-manno-octulosonate cytidylyltransferase.